Consider the following 219-residue polypeptide: Orotidine 5'-phosphate decarboxylase (219 aa).

Substrate is bound by residues aspartate 10, lysine 32, aspartate 58–threonine 67, serine 113, proline 163–tyrosine 173, glycine 186, and arginine 187. The Proton donor role is filled by lysine 60.

Belongs to the OMP decarboxylase family. Type 1 subfamily. As to quaternary structure, homodimer.

The enzyme catalyses orotidine 5'-phosphate + H(+) = UMP + CO2. It functions in the pathway pyrimidine metabolism; UMP biosynthesis via de novo pathway; UMP from orotate: step 2/2. In terms of biological role, catalyzes the decarboxylation of orotidine 5'-monophosphate (OMP) to uridine 5'-monophosphate (UMP). The chain is Orotidine 5'-phosphate decarboxylase from Thermoplasma volcanium (strain ATCC 51530 / DSM 4299 / JCM 9571 / NBRC 15438 / GSS1).